We begin with the raw amino-acid sequence, 525 residues long: uncharacterized protein (525 aa).

2 consecutive transmembrane segments (helical) span residues 36-56 and 61-81; these read AVAAVSLTALPIVPLALTLAL and ALPAGAALWASASLLAAAAAI. The region spanning 173 to 228 is the PAC domain; it reads SAVDIRLERTSADGPQFAHIYCEMTPLRDAEGNLLAIVAQSRDVSEEARLQAEAAA. Residues 246–466 form the Histidine kinase domain; the sequence is AVSHELRTPL…VIVVTIPSDA (221 aa). His249 carries the post-translational modification Phosphohistidine; by autocatalysis. Residues 506–525 are disordered; that stretch reads LHTGEIGREGGHGAAQAKTA.

It is found in the cell membrane. It carries out the reaction ATP + protein L-histidine = ADP + protein N-phospho-L-histidine.. This is an uncharacterized protein from Rhizobium meliloti (strain 1021) (Ensifer meliloti).